The sequence spans 159 residues: 2-C-methyl-D-erythritol 2,4-cyclodiphosphate synthase (159 aa).

Residues D8 and H10 each coordinate a divalent metal cation. Residues 8-10 (DVH) and 34-35 (HS) each bind 4-CDP-2-C-methyl-D-erythritol 2-phosphate. Position 42 (H42) interacts with a divalent metal cation. Residues 56–58 (DIG), 132–135 (TTTE), and R142 each bind 4-CDP-2-C-methyl-D-erythritol 2-phosphate.

This sequence belongs to the IspF family. As to quaternary structure, homotrimer. Requires a divalent metal cation as cofactor.

It catalyses the reaction 4-CDP-2-C-methyl-D-erythritol 2-phosphate = 2-C-methyl-D-erythritol 2,4-cyclic diphosphate + CMP. It functions in the pathway isoprenoid biosynthesis; isopentenyl diphosphate biosynthesis via DXP pathway; isopentenyl diphosphate from 1-deoxy-D-xylulose 5-phosphate: step 4/6. Functionally, involved in the biosynthesis of isopentenyl diphosphate (IPP) and dimethylallyl diphosphate (DMAPP), two major building blocks of isoprenoid compounds. Catalyzes the conversion of 4-diphosphocytidyl-2-C-methyl-D-erythritol 2-phosphate (CDP-ME2P) to 2-C-methyl-D-erythritol 2,4-cyclodiphosphate (ME-CPP) with a corresponding release of cytidine 5-monophosphate (CMP). This chain is 2-C-methyl-D-erythritol 2,4-cyclodiphosphate synthase, found in Chlorobium phaeobacteroides (strain BS1).